The primary structure comprises 60 residues: Mating pheromone En-2 (60 aa).

Cystine bridges form between cysteine 11–cysteine 39, cysteine 24–cysteine 35, cysteine 31–cysteine 57, and cysteine 36–cysteine 48.

It localises to the secreted. Functionally, mating ciliate pheromones (or gamones) are diffusible extracellular communication signals that distinguish different intraspecific classes of cells commonly referred to as 'mating types'. They prepare the latter for conjugation by changing their cell surface properties. This Euplotes nobilii (Ciliate) protein is Mating pheromone En-2.